The following is a 358-amino-acid chain: Methylthioribose-1-phosphate isomerase (358 aa).

Substrate is bound by residues 54 to 56, Arg-96, and Gln-205; that span reads RGA. Asp-246 acts as the Proton donor in catalysis. 256–257 lines the substrate pocket; it reads NK.

It belongs to the eIF-2B alpha/beta/delta subunits family. MtnA subfamily.

It carries out the reaction 5-(methylsulfanyl)-alpha-D-ribose 1-phosphate = 5-(methylsulfanyl)-D-ribulose 1-phosphate. It participates in amino-acid biosynthesis; L-methionine biosynthesis via salvage pathway; L-methionine from S-methyl-5-thio-alpha-D-ribose 1-phosphate: step 1/6. Its function is as follows. Catalyzes the interconversion of methylthioribose-1-phosphate (MTR-1-P) into methylthioribulose-1-phosphate (MTRu-1-P). The protein is Methylthioribose-1-phosphate isomerase of Pseudomonas syringae pv. tomato (strain ATCC BAA-871 / DC3000).